The primary structure comprises 329 residues: Holliday junction branch migration complex subunit RuvB (329 aa).

A large ATPase domain (RuvB-L) region spans residues 1-180 (MKNILQSTEC…FGIPIHLEFY (180 aa)). ATP-binding positions include Arg20, Gly61, Lys64, Thr65, Thr66, 127–129 (EDF), Arg170, Tyr180, and Arg217. Thr65 provides a ligand contact to Mg(2+). Residues 181-252 (STEELTKVIQ…FADKALLRLG (72 aa)) are small ATPAse domain (RuvB-S). A head domain (RuvB-H) region spans residues 255-329 (KLGLDRQDIQ…ISHLREQEYI (75 aa)). The DNA site is built by Arg308 and Arg313.

The protein belongs to the RuvB family. Homohexamer. Forms an RuvA(8)-RuvB(12)-Holliday junction (HJ) complex. HJ DNA is sandwiched between 2 RuvA tetramers; dsDNA enters through RuvA and exits via RuvB. An RuvB hexamer assembles on each DNA strand where it exits the tetramer. Each RuvB hexamer is contacted by two RuvA subunits (via domain III) on 2 adjacent RuvB subunits; this complex drives branch migration. In the full resolvosome a probable DNA-RuvA(4)-RuvB(12)-RuvC(2) complex forms which resolves the HJ.

The protein localises to the cytoplasm. The enzyme catalyses ATP + H2O = ADP + phosphate + H(+). Functionally, the RuvA-RuvB-RuvC complex processes Holliday junction (HJ) DNA during genetic recombination and DNA repair, while the RuvA-RuvB complex plays an important role in the rescue of blocked DNA replication forks via replication fork reversal (RFR). RuvA specifically binds to HJ cruciform DNA, conferring on it an open structure. The RuvB hexamer acts as an ATP-dependent pump, pulling dsDNA into and through the RuvAB complex. RuvB forms 2 homohexamers on either side of HJ DNA bound by 1 or 2 RuvA tetramers; 4 subunits per hexamer contact DNA at a time. Coordinated motions by a converter formed by DNA-disengaged RuvB subunits stimulates ATP hydrolysis and nucleotide exchange. Immobilization of the converter enables RuvB to convert the ATP-contained energy into a lever motion, pulling 2 nucleotides of DNA out of the RuvA tetramer per ATP hydrolyzed, thus driving DNA branch migration. The RuvB motors rotate together with the DNA substrate, which together with the progressing nucleotide cycle form the mechanistic basis for DNA recombination by continuous HJ branch migration. Branch migration allows RuvC to scan DNA until it finds its consensus sequence, where it cleaves and resolves cruciform DNA. This Ehrlichia chaffeensis (strain ATCC CRL-10679 / Arkansas) protein is Holliday junction branch migration complex subunit RuvB.